The following is a 579-amino-acid chain: Folliculin (579 aa).

The interval 30 to 81 (PQGDGNEDSPGQGEQAEEEEGGIQMNSRMRAHSPAEGASVESSSPGPKKSDM) is disordered. Phosphoserine is present on residues Ser-62 and Ser-73. The 157-residue stretch at 86 to 242 (RSLAAGHPGY…RNGNAARSLT (157 aa)) folds into the uDENN FLCN/SMCR8-type domain. An essential for interaction with LDHA region spans residues 210-220 (AEQFGCPQRAQ). Positions 287–310 (EKLADLEEESESWDNSEAEEEEKA) form a coiled coil. Over residues 294-308 (EESESWDNSEAEEEE) the composition is skewed to acidic residues. Residues 294–337 (EESESWDNSEAEEEEKAPVLPESTEGRELTQGPAESSSLSGCGS) form a disordered region. Residue Ser-302 is modified to Phosphoserine. Residues 326-336 (PAESSSLSGCG) are compositionally biased toward polar residues. One can recognise a cDENN FLCN/SMCR8-type domain in the interval 339–491 (QPRKLPVFKS…ILNKIEAALT (153 aa)). Ser-406, Ser-537, and Ser-542 each carry phosphoserine; by ULK1. The 66-residue stretch at 493–558 (QNLSVDVVDQ…LLKFWMTGLS (66 aa)) folds into the dDENN FLCN/SMCR8-type domain. Ser-571 bears the Phosphoserine mark.

It belongs to the folliculin family. As to quaternary structure, interacts (via C-terminus) with FNIP1 or FNIP2 (via C-terminus). Component of the lysosomal folliculin complex (LFC), composed of FLCN, FNIP1 (or FNIP2), RagA/RRAGA or RagB/RRAGB GDP-bound, RagC/RRAGC or RagD/RRAGD GTP-bound, and Ragulator. Interaction with FNIP1 or FNIP2 mediates indirect interaction with the PRKAA1, PRKAB1 and PRKAG1 subunits of 5'-AMP-activated protein kinase (AMPK). Interacts with HSP90AA1 in the presence of FNIP1. Interacts with HSP70, STUB1, CDC37, AHSA1, CCT2, STIP1, PTGES3 and PPP5C. Interacts with GABARAP; interaction takes place in the presence of FNIP1 and/or FNIP2. Interacts with RILP; the interaction is direct and promotes association between RILP and RAB34. Interacts with KIF3A and KIF3B. Interacts with lactate dehydrogenase LDHA, but not LDHB; the interaction is direct, may preferentially bind LDHA dimers rather than tetramers, and regulates LDHA activity, acting as an uncompetitive inhibitor. Phosphorylation by ULK1 modulates the interaction with GABARAP and is required to regulate autophagy. As to expression, expressed in most tissues tested, including skin, lung, kidney, heart, testis and stomach.

It is found in the lysosome membrane. The protein localises to the cytoplasm. It localises to the cytosol. The protein resides in the cell projection. Its subcellular location is the cilium. It is found in the cytoskeleton. The protein localises to the microtubule organizing center. It localises to the centrosome. The protein resides in the spindle. Its subcellular location is the nucleus. With respect to regulation, GTPase-activating activity is inhibited in the folliculin complex (LFC), which stabilizes the GDP-bound state of RagA/RRAGA (or RagB/RRAGB), because Arg-164 is located far from the RagC/RRAGC or RagD/RRAGD nucleotide pocket. Disassembly of the LFC complex upon amino acid restimulation liberates the GTPase-activating activity. Its function is as follows. Multi-functional protein, involved in both the cellular response to amino acid availability and in the regulation of glycolysis. GTPase-activating protein that plays a key role in the cellular response to amino acid availability through regulation of the non-canonical mTORC1 signaling cascade controlling the MiT/TFE factors TFEB and TFE3. Activates mTORC1 by acting as a GTPase-activating protein: specifically stimulates GTP hydrolysis by RagC/RRAGC or RagD/RRAGD, promoting the conversion to the GDP-bound state of RagC/RRAGC or RagD/RRAGD, and thereby activating the kinase activity of mTORC1. The GTPase-activating activity is inhibited during starvation and activated in presence of nutrients. Acts as a key component for non-canonical mTORC1-dependent control of the MiT/TFE factors TFEB and TFE3, while it is not involved in mTORC1-dependent phosphorylation of canonical RPS6KB1/S6K1 and EIF4EBP1/4E-BP1. In low-amino acid conditions, the lysosomal folliculin complex (LFC) is formed on the membrane of lysosomes, which inhibits the GTPase-activating activity of FLCN, inactivates mTORC1 and maximizes nuclear translocation of TFEB and TFE3. Upon amino acid restimulation, RagA/RRAGA (or RagB/RRAGB) nucleotide exchange promotes disassembly of the LFC complex and liberates the GTPase-activating activity of FLCN, leading to activation of mTORC1 and subsequent cytoplasmic retention of TFEB and TFE3. Indirectly acts as a positive regulator of Wnt signaling by promoting mTOR-dependent cytoplasmic retention of MiT/TFE factor TFE3. Required for the exit of hematopoietic stem cell from pluripotency by promoting mTOR-dependent cytoplasmic retention of TFE3, thereby increasing Wnt signaling. Acts as an inhibitor of browning of adipose tissue by regulating mTOR-dependent cytoplasmic retention of TFE3. Involved in the control of embryonic stem cells differentiation; together with LAMTOR1 it is necessary to recruit and activate RagC/RRAGC and RagD/RRAGD at the lysosomes, and to induce exit of embryonic stem cells from pluripotency via non-canonical, mTOR-independent TFE3 inactivation. In response to flow stress, regulates STK11/LKB1 accumulation and mTORC1 activation through primary cilia: may act by recruiting STK11/LKB1 to primary cilia for activation of AMPK resided at basal bodies, causing mTORC1 down-regulation. Together with FNIP1 and/or FNIP2, regulates autophagy: following phosphorylation by ULK1, interacts with GABARAP and promotes autophagy. Required for starvation-induced perinuclear clustering of lysosomes by promoting association of RILP with its effector RAB34. Regulates glycolysis by binding to lactate dehydrogenase LDHA, acting as an uncompetitive inhibitor. In Homo sapiens (Human), this protein is Folliculin.